We begin with the raw amino-acid sequence, 288 residues long: Glutamate racemase (288 aa).

The interval 1–21 (MAIARQDVNISSPEATTSDAQ) is disordered. Positions 8–21 (VNISSPEATTSDAQ) are enriched in polar residues. Substrate contacts are provided by residues 32-33 (DS) and 64-65 (YG). Cysteine 96 serves as the catalytic Proton donor/acceptor. Residue 97–98 (NT) participates in substrate binding. The active-site Proton donor/acceptor is cysteine 209. Residue 210 to 211 (TH) coordinates substrate.

This sequence belongs to the aspartate/glutamate racemases family.

The enzyme catalyses L-glutamate = D-glutamate. The protein operates within cell wall biogenesis; peptidoglycan biosynthesis. Functionally, provides the (R)-glutamate required for cell wall biosynthesis. The protein is Glutamate racemase of Proteus mirabilis (strain HI4320).